We begin with the raw amino-acid sequence, 361 residues long: DNA replication and repair protein RecF (361 aa).

Position 30 to 37 (30 to 37 (GANGSGKT)) interacts with ATP.

This sequence belongs to the RecF family.

It is found in the cytoplasm. Its function is as follows. The RecF protein is involved in DNA metabolism; it is required for DNA replication and normal SOS inducibility. RecF binds preferentially to single-stranded, linear DNA. It also seems to bind ATP. The protein is DNA replication and repair protein RecF of Pectobacterium atrosepticum (strain SCRI 1043 / ATCC BAA-672) (Erwinia carotovora subsp. atroseptica).